The following is a 131-amino-acid chain: Chromatin accessibility complex protein 1 (131 aa).

At A2 the chain carries N-acetylalanine. A coiled-coil region spans residues 100–124 (ASKYLKMLKEEKREEDEENDNDNES). Residue K102 is modified to N6-acetyllysine. Residues 109 to 131 (EEKREEDEENDNDNESDHDEADS) are disordered. Over residues 112–131 (REEDEENDNDNESDHDEADS) the composition is skewed to acidic residues. S124 is modified (phosphoserine).

As to quaternary structure, heterodimer with POLE3; binds to DNA. Component of the CHRAC ISWI chromatin remodeling complex at least composed of SMARCA5/SNF2H, BAZ1A/ACF1, CHRAC1 and POLE3; the complex preferentially binds DNA through the CHRAC1-POLE3 heterodimer and possesses ATP-dependent nucleosome-remodeling activity. Within the complex, the heterodimer with POLE3 interacts with SMARCA5/SNF2H; the interaction is direct and enhances nucleosome sliding activity by the SMARCA5/SNF2H and BAZ1A/ACF1 interaction. Within the complex, the heterodimer with POLE3 interacts with BAZ1A/ACF1; the interactions are direct. Expressed in heart, brain, placenta, lung, liver, skeletal muscle, kidney and pancreas.

It is found in the nucleus. Functionally, forms a complex with DNA polymerase epsilon subunit POLE3 and binds naked DNA, which is then incorporated into chromatin, aided by the nucleosome remodeling activity of ISWI/SNF2H and ACF1. Does not enhance nucleosome sliding activity of the ACF-5 ISWI chromatin remodeling complex. This chain is Chromatin accessibility complex protein 1 (CHRAC1), found in Homo sapiens (Human).